A 670-amino-acid chain; its full sequence is MAHHLPAAMESHQDFRSIKAKFQASQPEPSDLPKKPPKPEFGKLKKFSQPELSEHPKKAPLPEFGAVSLKPPPPEVTDLPKKPPPPEVTDLPKKPPPPEVTDLPKKPPPPEVTDLPKKPSKLELSDLSKKFPQLGATPFPRKPLQPEVGEAPLKASLPEPGAPARKPLQPDELSHPARPPSEPKSGAFPRKLWQPEAGEATPRSPQPELSTFPKKPAQPEFNVYPKKPPQPQVGGLPKKSVPQPEFSEAAQTPLWKPQSSEPKRDSSAFPKKASQPPLSDFPKKPPQPELGDLTRTSSEPEVSVLPKRPRPAEFKALSKKPPQPELGGLPRTSSEPEFNSLPRKLLQPERRGPPRKFSQPEPSAVLKRHPQPEFFGDLPRKPPLPSSASESSLPAAVAGFSSRHPLSPGFGAAGTPRWRSGGLVHSGGARPGLRPSHPPRRRPLPPASSLGHPPAKPPLPPGPVDMQSFRRPSAASIDLRRTRSAAGLHFQDRQPEDIPQVPDEIYELYDDVEPRDDSSPSPKGRDEAPSVQQAARRPPQDPALRKEKDPQPQQLPPMDPKLLKQLRKAEKAEREFRKKFKFEGEIVVHTKMMIDPNAKTRRGGGKHLGIRRGEILEVIEFTSNEEMLCRDPKGKYGYVPRTALLPLETEVYDDVDFCDPLENQPLPLGR.

Residues 1-561 (MAHHLPAAME…PQQLPPMDPK (561 aa)) are disordered. Basic and acidic residues predominate over residues 31 to 43 (DLPKKPPKPEFGK). Repeat copies occupy residues 70-81 (KPPPPEVTDLPK), 82-93 (KPPPPEVTDLPK), 94-105 (KPPPPEVTDLPK), and 106-117 (KPPPPEVTDLPK). The tract at residues 70-165 (KPPPPEVTDL…SLPEPGAPAR (96 aa)) is 4 X 12 AA repeats of K-P-P-[PQ]-P-[EQ]-[VAF]-T-D-L-P-K. Basic and acidic residues predominate over residues 114–129 (DLPKKPSKLELSDLSK). Position 340 is a phosphoserine (Ser340). Residues 386–398 (SSASESSLPAAVA) show a composition bias toward low complexity. Over residues 454–463 (PAKPPLPPGP) the composition is skewed to pro residues. Residues 504 to 514 (EIYELYDDVEP) are compositionally biased toward acidic residues. The span at 515–528 (RDDSSPSPKGRDEA) shows a compositional bias: basic and acidic residues. Positions 571–649 (KAEREFRKKF…PRTALLPLET (79 aa)) constitute an SH3 domain.

In terms of assembly, interacts with SKAP2, LCP2 and DBNL. May interact with LYN. Interacts with NEK6. Post-translationally, may be phosphorylated on tyrosines. In terms of tissue distribution, expressed in peripheral blood leukocytes and bone marrow. Expressed in monocytes, and to a lesser extent in granulocytes and lymphocytes. Not expressed in non hematopoietic tissues except in lung.

Functionally, may be involved in myeloid differentiation. May be involved in integrin signaling in neutrophils. Binds to PtdIns(4)P. This is PML-RARA-regulated adapter molecule 1 (PRAM1) from Homo sapiens (Human).